The chain runs to 194 residues: UPF0232 protein MSMEG_0004/MSMEI_0006 (194 aa).

Positions 1–14 are enriched in acidic residues; that stretch reads MTGPFDDDGPEEDA. The interval 1-81 is disordered; it reads MTGPFDDDGP…GPGPDARDPQ (81 aa). A compositionally biased stretch (basic and acidic residues) spans 30-52; sequence DLVRRTLEEARGAARSQGKDVGR.

Belongs to the UPF0232 family.

In Mycolicibacterium smegmatis (strain ATCC 700084 / mc(2)155) (Mycobacterium smegmatis), this protein is UPF0232 protein MSMEG_0004/MSMEI_0006.